We begin with the raw amino-acid sequence, 2099 residues long: Dedicator of cytokinesis protein 8 (2099 aa).

3 positions are modified to phosphoserine: Ser-20, Ser-139, and Ser-451. A C2 DOCK-type domain is found at 560 to 729 (RNLLYVYPQR…GVFNIEVQAV (170 aa)). 4 positions are modified to phosphoserine: Ser-904, Ser-936, Ser-1145, and Ser-1243. A DOCKER domain is found at 1632–2066 (KSYQASPDLR…LRPMIERKIP (435 aa)). Ser-2087 carries the phosphoserine modification.

The protein belongs to the DOCK family. As to quaternary structure, interacts (via DOCKER domain) with GTPase CDC42; the interaction activates CDC42 by exchanging GDP for GTP. The unphosphorylated form interacts (via DOCKER domain) with LRCH1 (via LRR repeats); the interaction prevents the association between DOCK8 and CDC42. Interacts with CCDC88B. Post-translationally, in response to chemokine CXCL12/SDF-1-alpha stimulation, phosphorylated by PRKCA/PKC-alpha which promotes DOCK8 dissociation from LRCH1. Expressed in peripheral blood mononuclear cells (PBMCs).

The protein resides in the cytoplasm. Its subcellular location is the cell membrane. It localises to the cell projection. It is found in the lamellipodium membrane. Functionally, guanine nucleotide exchange factor (GEF) which specifically activates small GTPase CDC42 by exchanging bound GDP for free GTP. During immune responses, required for interstitial dendritic cell (DC) migration by locally activating CDC42 at the leading edge membrane of DC. Required for CD4(+) T-cell migration in response to chemokine stimulation by promoting CDC42 activation at T cell leading edge membrane. Is involved in NK cell cytotoxicity by controlling polarization of microtubule-organizing center (MTOC), and possibly regulating CCDC88B-mediated lytic granule transport to MTOC during cell killing. In Homo sapiens (Human), this protein is Dedicator of cytokinesis protein 8 (DOCK8).